The following is a 229-amino-acid chain: Uracil-DNA glycosylase (229 aa).

Catalysis depends on D72, which acts as the Proton acceptor.

The protein belongs to the uracil-DNA glycosylase (UDG) superfamily. UNG family.

The protein resides in the cytoplasm. The catalysed reaction is Hydrolyzes single-stranded DNA or mismatched double-stranded DNA and polynucleotides, releasing free uracil.. Its function is as follows. Excises uracil residues from the DNA which can arise as a result of misincorporation of dUMP residues by DNA polymerase or due to deamination of cytosine. This Dichelobacter nodosus (strain VCS1703A) protein is Uracil-DNA glycosylase.